The primary structure comprises 362 residues: Transcription factor bHLH133 (362 aa).

One can recognise a bHLH domain in the interval 209–258; that stretch reads LQVPSSQSTLKVRKEKLGGRIASLHQLVSPFGKTDTASVLSEAIGYIRFL.

It belongs to the bHLH protein family. In terms of assembly, homodimer.

Its subcellular location is the nucleus. The chain is Transcription factor bHLH133 (BHLH133) from Arabidopsis thaliana (Mouse-ear cress).